We begin with the raw amino-acid sequence, 368 residues long: tRNA 2-selenouridine synthase (368 aa).

In terms of domain architecture, Rhodanese spans 15–138 (FLNQHPIMDV…MRQYLIGVIE (124 aa)). The active-site S-selanylcysteine intermediate is cysteine 98.

This sequence belongs to the SelU family. As to quaternary structure, monomer.

The catalysed reaction is 5-methylaminomethyl-2-thiouridine(34) in tRNA + selenophosphate + (2E)-geranyl diphosphate + H2O + H(+) = 5-methylaminomethyl-2-selenouridine(34) in tRNA + (2E)-thiogeraniol + phosphate + diphosphate. It catalyses the reaction 5-methylaminomethyl-2-thiouridine(34) in tRNA + (2E)-geranyl diphosphate = 5-methylaminomethyl-S-(2E)-geranyl-thiouridine(34) in tRNA + diphosphate. The enzyme catalyses 5-methylaminomethyl-S-(2E)-geranyl-thiouridine(34) in tRNA + selenophosphate + H(+) = 5-methylaminomethyl-2-(Se-phospho)selenouridine(34) in tRNA + (2E)-thiogeraniol. It carries out the reaction 5-methylaminomethyl-2-(Se-phospho)selenouridine(34) in tRNA + H2O = 5-methylaminomethyl-2-selenouridine(34) in tRNA + phosphate. Its function is as follows. Involved in the post-transcriptional modification of the uridine at the wobble position (U34) of tRNA(Lys), tRNA(Glu) and tRNA(Gln). Catalyzes the conversion of 2-thiouridine (S2U-RNA) to 2-selenouridine (Se2U-RNA). Acts in a two-step process involving geranylation of 2-thiouridine (S2U) to S-geranyl-2-thiouridine (geS2U) and subsequent selenation of the latter derivative to 2-selenouridine (Se2U) in the tRNA chain. This is tRNA 2-selenouridine synthase from Shewanella baltica (strain OS155 / ATCC BAA-1091).